Here is a 311-residue protein sequence, read N- to C-terminus: HPr kinase/phosphorylase (311 aa).

Active-site residues include His-139 and Lys-160. 154–161 is a binding site for ATP; the sequence is GQSGVGKS. Position 161 (Ser-161) interacts with Mg(2+). Residue Asp-178 is the Proton acceptor; for phosphorylation activity. Proton donor; for dephosphorylation activity of the active site. The tract at residues 202–211 is important for the catalytic mechanism of both phosphorylation and dephosphorylation; that stretch reads LEIRGIGIID. Residue Glu-203 coordinates Mg(2+). Arg-244 is a catalytic residue. Residues 265–270 form an important for the catalytic mechanism of dephosphorylation region; that stretch reads PVRPGR.

This sequence belongs to the HPrK/P family. Homohexamer. Mg(2+) serves as cofactor.

The enzyme catalyses [HPr protein]-L-serine + ATP = [HPr protein]-O-phospho-L-serine + ADP + H(+). The catalysed reaction is [HPr protein]-O-phospho-L-serine + phosphate + H(+) = [HPr protein]-L-serine + diphosphate. Its function is as follows. Catalyzes the ATP- as well as the pyrophosphate-dependent phosphorylation of a specific serine residue in HPr, a phosphocarrier protein of the phosphoenolpyruvate-dependent sugar phosphotransferase system (PTS). HprK/P also catalyzes the pyrophosphate-producing, inorganic phosphate-dependent dephosphorylation (phosphorolysis) of seryl-phosphorylated HPr (P-Ser-HPr). The two antagonistic activities of HprK/P are regulated by several intracellular metabolites, which change their concentration in response to the absence or presence of rapidly metabolisable carbon sources (glucose, fructose, etc.) in the growth medium. Therefore, by controlling the phosphorylation state of HPr, HPrK/P is a sensor enzyme that plays a major role in the regulation of carbon metabolism and sugar transport: it mediates carbon catabolite repression (CCR), and regulates PTS-catalyzed carbohydrate uptake and inducer exclusion. The protein is HPr kinase/phosphorylase of Exiguobacterium sp. (strain ATCC BAA-1283 / AT1b).